Consider the following 235-residue polypeptide: Fibrillarin-like rRNA/tRNA 2'-O-methyltransferase (235 aa).

S-adenosyl-L-methionine contacts are provided by residues 91–92 (TT), 110–111 (EF), 137–138 (DA), and 157–160 (DVAQ).

The protein belongs to the methyltransferase superfamily. Fibrillarin family. In terms of assembly, interacts with nop5. Component of box C/D small ribonucleoprotein (sRNP) particles that contain rpl7ae, FlpA and nop5, plus a guide RNA.

Involved in pre-rRNA and tRNA processing. Utilizes the methyl donor S-adenosyl-L-methionine to catalyze the site-specific 2'-hydroxyl methylation of ribose moieties in rRNA and tRNA. Site specificity is provided by a guide RNA that base pairs with the substrate. Methylation occurs at a characteristic distance from the sequence involved in base pairing with the guide RNA. The polypeptide is Fibrillarin-like rRNA/tRNA 2'-O-methyltransferase (Pyrobaculum aerophilum (strain ATCC 51768 / DSM 7523 / JCM 9630 / CIP 104966 / NBRC 100827 / IM2)).